The following is a 513-amino-acid chain: Voltage-gated potassium channel regulatory subunit KCNG1 (513 aa).

Residues 1 to 224 (MTLLPGDNSD…DMVERPHSGL (224 aa)) lie on the Cytoplasmic side of the membrane. The segment at 184-204 (EEDDALDSEGRDSEGPAEGEG) is disordered. Residues 191–204 (SEGRDSEGPAEGEG) show a composition bias toward basic and acidic residues. Residues 225–246 (PGKVFACLSVLFVTVTAVNLSV) traverse the membrane as a helical segment. Over 247 to 267 (STLPSLREEEEQGHCSQMCHN) the chain is Extracellular. Residues 268 to 289 (VFIVESVCVGWFSLEFLLRLIQ) traverse the membrane as a helical segment. Residues 290–300 (APSKFAFLRSP) are Cytoplasmic-facing. Residues 301–321 (LTLIDLVAILPYYITLLVDGA) form a helical membrane-spanning segment. Over 322 to 338 (AAGRRKPGAGNSYLDKV) the chain is Extracellular. Residues 339-359 (GLVLRVLRALRILYVMRLARH) form a helical; Voltage-sensor membrane-spanning segment. At 360-374 (SLGLQTLGLTARRCT) the chain is on the cytoplasmic side. The helical transmembrane segment at 375 to 396 (REFGLLLLFLCVAIALFAPLLY) threads the bilayer. At 397–411 (VIENEMADSPEFTSI) the chain is on the extracellular side. Positions 412 to 423 (PACYWWAVITMT) form an intramembrane region, helical. The Selectivity filter motif lies at 424–429 (TVGYGD). An intramembrane segment occupies 424-431 (TVGYGDMV). Topologically, residues 432 to 438 (PRSTPGQ) are extracellular. Residues 439–467 (VVALSSILSGILLMAFPVTSIFHTFSRSY) form a helical membrane-spanning segment. Residues 468-513 (LELKQEQERVMFRRAQFLIKTKSQLSVSQDSDILFGSASSDTRDNN) lie on the Cytoplasmic side of the membrane.

This sequence belongs to the potassium channel family. G (TC 1.A.1.2) subfamily. Kv6.1/KCNG1 sub-subfamily. In terms of assembly, heterotetramer with KCNB1. Heterotetramer with KCNB2. In terms of tissue distribution, expressed in brain and placenta, and at much lower levels in kidney and pancreas.

Its subcellular location is the cell membrane. Functionally, regulatory alpha-subunit of the voltage-gated potassium (Kv) channel which, when coassembled with KCNB1 or KCNB2, can modulate their expression and their gating kinetics by acting on deactivation upon repolarization and inactivation during maintained depolarization. Potassium channel subunit that does not form functional channels by itself. The protein is Voltage-gated potassium channel regulatory subunit KCNG1 of Homo sapiens (Human).